Reading from the N-terminus, the 100-residue chain is Putative septation protein SpoVG (100 aa).

Belongs to the SpoVG family.

Its function is as follows. Could be involved in septation. The polypeptide is Putative septation protein SpoVG (Clostridium novyi (strain NT)).